Reading from the N-terminus, the 766-residue chain is Protein transport protein Sec23B (766 aa).

The residue at position 2 (alanine 2) is an N-acetylalanine. Residues cysteine 61, cysteine 66, cysteine 85, and cysteine 88 each coordinate Zn(2+). Lysine 564 is subject to N6-acetyllysine. A Gelsolin-like repeat occupies 633–719; that stretch reads PEPVLLDSSS…EHGGSQARFL (87 aa).

It belongs to the SEC23/SEC24 family. SEC23 subfamily. COPII is composed of at least five proteins: the Sec23/24 complex, the Sec13/31 complex and Sar1. Interacts with SAR1A.

The protein resides in the cytoplasmic vesicle. The protein localises to the COPII-coated vesicle membrane. It localises to the endoplasmic reticulum membrane. It is found in the cytoplasm. Its subcellular location is the cytosol. In terms of biological role, component of the coat protein complex II (COPII) which promotes the formation of transport vesicles from the endoplasmic reticulum (ER). The coat has two main functions, the physical deformation of the endoplasmic reticulum membrane into vesicles and the selection of cargo molecules for their transport to the Golgi complex. This is Protein transport protein Sec23B from Pongo abelii (Sumatran orangutan).